We begin with the raw amino-acid sequence, 58 residues long: UPF0391 membrane protein Shewmr4_2671 (58 aa).

Helical transmembrane passes span 6-26 (LMFL…IAGA) and 28-48 (AGIA…SLLV).

Belongs to the UPF0391 family.

It is found in the cell membrane. In Shewanella sp. (strain MR-4), this protein is UPF0391 membrane protein Shewmr4_2671.